The sequence spans 105 residues: ATPase inhibitor A, mitochondrial (105 aa).

The tract at residues M17 to A52 is disordered. Residues L22 to A51 form an N-terminal inhibitory region region. Positions L25–S38 are enriched in gly residues. The stretch at F58 to D105 forms a coiled coil. The antiparallel alpha-helical coiled coil region stretch occupies residues H73–D105.

It belongs to the ATPase inhibitor family. Homodimer; represents the active form and is present at a pH value below 6.5. Homotetramer; represents the inactive form and is present at a pH value above 7.0.

The protein localises to the mitochondrion. Endogenous F(1)F(o)-ATPase inhibitor limiting ATP depletion when the mitochondrial membrane potential falls below a threshold and the F(1)F(o)-ATP synthase starts hydrolyzing ATP to pump protons out of the mitochondrial matrix. Required to avoid the consumption of cellular ATP when the F(1)F(o)-ATP synthase enzyme acts as an ATP hydrolase. Indirectly acts as a regulator of heme synthesis in erythroid tissues: regulates heme synthesis by modulating the mitochondrial pH and redox potential, allowing fech to efficiently catalyze the incorporation of iron into protoporphyrin IX to produce heme. The sequence is that of ATPase inhibitor A, mitochondrial from Danio rerio (Zebrafish).